An 840-amino-acid polypeptide reads, in one-letter code: Leucine--tRNA ligase (840 aa).

Residues 44–55 (PYPSANGLHVGH) carry the 'HIGH' region motif. The 'KMSKS' region signature appears at 617–621 (KMSKS). K620 serves as a coordination point for ATP.

Belongs to the class-I aminoacyl-tRNA synthetase family.

Its subcellular location is the cytoplasm. It catalyses the reaction tRNA(Leu) + L-leucine + ATP = L-leucyl-tRNA(Leu) + AMP + diphosphate. This is Leucine--tRNA ligase from Borreliella afzelii (strain PKo) (Borrelia afzelii).